The following is a 196-amino-acid chain: ATP-dependent Clp protease proteolytic subunit 1 (196 aa).

The active-site Nucleophile is Ser96. Residue His121 is part of the active site.

The protein belongs to the peptidase S14 family. In terms of assembly, fourteen ClpP subunits assemble into 2 heptameric rings which stack back to back to give a disk-like structure with a central cavity, resembling the structure of eukaryotic proteasomes.

It is found in the cytoplasm. The enzyme catalyses Hydrolysis of proteins to small peptides in the presence of ATP and magnesium. alpha-casein is the usual test substrate. In the absence of ATP, only oligopeptides shorter than five residues are hydrolyzed (such as succinyl-Leu-Tyr-|-NHMec, and Leu-Tyr-Leu-|-Tyr-Trp, in which cleavage of the -Tyr-|-Leu- and -Tyr-|-Trp bonds also occurs).. Functionally, cleaves peptides in various proteins in a process that requires ATP hydrolysis. Has a chymotrypsin-like activity. Plays a major role in the degradation of misfolded proteins. In Prochlorococcus marinus (strain SARG / CCMP1375 / SS120), this protein is ATP-dependent Clp protease proteolytic subunit 1.